The chain runs to 226 residues: MTLPNVEWAVSPGLTPYQPALAFMEARAAAIAAGEANELVWLLEHPPLYTAGTSAKAGDLLSPDRFPVYETGRGGEYTYHGPGQRVAYVMLDLTRRGRDVRKFIQSLENWLIGAAAQFGIKAGIRDGRVGVWVDRSGGREDKIAAIGVRLRRWVSFHGIAFNVDPDLSHFGGITPCGISDPRFGVTSLADLGHTVDMADFDTALHLAWTEAFGPVRRADAPELVPD.

The BPL/LPL catalytic domain occupies 34–216 (GEANELVWLL…AWTEAFGPVR (183 aa)). Residues 73 to 80 (RGGEYTYH), 145 to 147 (AIG), and 158 to 160 (GIA) each bind substrate. C176 (acyl-thioester intermediate) is an active-site residue.

It belongs to the LipB family.

The protein resides in the cytoplasm. The enzyme catalyses octanoyl-[ACP] + L-lysyl-[protein] = N(6)-octanoyl-L-lysyl-[protein] + holo-[ACP] + H(+). It functions in the pathway protein modification; protein lipoylation via endogenous pathway; protein N(6)-(lipoyl)lysine from octanoyl-[acyl-carrier-protein]: step 1/2. In terms of biological role, catalyzes the transfer of endogenously produced octanoic acid from octanoyl-acyl-carrier-protein onto the lipoyl domains of lipoate-dependent enzymes. Lipoyl-ACP can also act as a substrate although octanoyl-ACP is likely to be the physiological substrate. The chain is Octanoyltransferase from Maricaulis maris (strain MCS10) (Caulobacter maris).